Reading from the N-terminus, the 383-residue chain is L-lactate dehydrogenase (383 aa).

Positions 1–380 constitute an FMN hydroxy acid dehydrogenase domain; the sequence is MIISSTFDYR…THESLASTDA (380 aa). Residue Tyr24 participates in substrate binding. FMN-binding residues include Ser106 and Gln127. Residue Tyr129 coordinates substrate. An FMN-binding site is contributed by Thr155. Arg164 serves as a coordination point for substrate. Position 251 (Lys251) interacts with FMN. The Proton acceptor role is filled by His275. Arg278 serves as a coordination point for substrate. Residue 306–330 coordinates FMN; that stretch reads DSGVRSGLDVVRMIAQGADAVMIGR.

Belongs to the FMN-dependent alpha-hydroxy acid dehydrogenase family. FMN serves as cofactor.

It is found in the cell inner membrane. It carries out the reaction (S)-lactate + A = pyruvate + AH2. Catalyzes the conversion of L-lactate to pyruvate. Is coupled to the respiratory chain. This is L-lactate dehydrogenase from Bartonella quintana (strain Toulouse) (Rochalimaea quintana).